Consider the following 78-residue polypeptide: Acyl carrier protein (78 aa).

Residues 2 to 77 form the Carrier domain; that stretch reads SSIEERVKKI…QATSYVEANL (76 aa). Serine 37 carries the O-(pantetheine 4'-phosphoryl)serine modification.

Belongs to the acyl carrier protein (ACP) family. In terms of processing, 4'-phosphopantetheine is transferred from CoA to a specific serine of apo-ACP by AcpS. This modification is essential for activity because fatty acids are bound in thioester linkage to the sulfhydryl of the prosthetic group.

The protein localises to the cytoplasm. It functions in the pathway lipid metabolism; fatty acid biosynthesis. Functionally, carrier of the growing fatty acid chain in fatty acid biosynthesis. This chain is Acyl carrier protein, found in Hydrogenovibrio crunogenus (strain DSM 25203 / XCL-2) (Thiomicrospira crunogena).